A 195-amino-acid chain; its full sequence is uncharacterized protein (195 aa).

2 disordered regions span residues 1–54 and 173–195; these read MPKG…SNKI and LAGA…KPIS. The span at 7 to 20 shows a compositional bias: basic and acidic residues; it reads KPNEKKEELEKFAK. A compositionally biased stretch (polar residues) spans 45-54; it reads QNDSSSSNKI. The stretch at 48–97 forms a coiled coil; that stretch reads SSSSNKIVLSQAEKDLLRTELDKTEEEISTLKQVLSARQKHAAELKRKLG.

It belongs to the TPD52 family.

This is an uncharacterized protein from Caenorhabditis elegans.